The primary structure comprises 70 residues: Mu-agatoxin-Ao1a (70 aa).

Residues 1–20 form the signal peptide; that stretch reads MKAIIFFCFLSVMVFIVAEA. Positions 21–33 are excised as a propeptide; that stretch reads SSLEALKIFEGER. 4 disulfides stabilise this stretch: Cys-35-Cys-50, Cys-42-Cys-55, Cys-49-Cys-65, and Cys-57-Cys-63. An Asparagine amide modification is found at Asn-69.

The protein belongs to the neurotoxin 07 (Beta/delta-agtx) family. 04 (aga-5) subfamily. In terms of tissue distribution, expressed by the venom gland.

The protein localises to the secreted. In terms of biological role, insecticidal neurotoxin that modulates the insect Nav channel (DmNaV1/tipE (para/tipE)) in a unique manner, with both the activation and inactivation processes being affected. The voltage dependence of activation is shifted toward more hyperpolarized potentials (analogous to site 4 toxins) and a non-inactivating persistent sodium current is induced (site 3-like action). Interestingly, both effects take place in a voltage-dependent manner, producing a bell-shaped curve between -80 and 0 mV. The sequence is that of Mu-agatoxin-Ao1a from Agelena orientalis (Funnel-web spider).